The primary structure comprises 247 residues: Transmembrane protein 69 (247 aa).

The next 5 helical transmembrane spans lie at Ala97–Met117, Ile122–Gly142, Tyr159–Ser179, Ala185–Pro205, and Ile216–Phe236.

The protein resides in the membrane. This chain is Transmembrane protein 69 (TMEM69), found in Homo sapiens (Human).